The following is a 677-amino-acid chain: MNFELTSAYKPTGDQPEAIAQLTEGVLEGVPAQTLLGVTGSGKTFTIANVIANINKPTLILSHNKTLAAQLYSEFKGFFPNNAVEYYVSYYDYYQPEAYLPSSDTYIEKDLAINDEIDKLRLAATSALLSGRKDVVVVSSVSCIYGMGNPSDFYNNVIEIERGRTINRNVFLRRLVDSLYMRNDIELNRGNFRVKGDTVDIYLAYSDNLLRVTFWGDEIDGIEEVDPVSGVTIAPFEAYKIYPANLFMTTKEATLRAIHEIEDDLTKQVAYFESIGKEYEAKRLYERVTYDMEMIRELGHCSGIENYSRYFDGRAAGTRPYCLLDFFPDDFLIVIDESHVSVPQIRAMYGGDRARKINLVEYGFRLPAAMDNRPLKFEEFESMAKQVIYVSATPADYELVQSEGIVVEQVIRPTGLLDPVIEVRPSLNQIDDLMEEIQIRIEKEERVLVTTLTKRMAEELTEYLLNNNVRCNYIHSDVDTLERVKIMDDLRQGVYDVLIGVNLLREGLDLPEVSLVAILDADKEGFLRSHRSLTQTAGRAARNVNGMVIMYADKITDSMRLTIDETNRRREKQLAYNEEHGITPQQIKKARNLSVFGNGAETEDTQKGTRAYVEPSSPNIAADPVVQYMSKAQLEKSMERTRKLMQEAAKKLEFIEAAQYRDELLKMEDLMKEKWPG.

The 389-residue stretch at 24–412 (EGVLEGVPAQ…EGIVVEQVIR (389 aa)) folds into the Helicase ATP-binding domain. ATP is bound at residue 37-44 (GVTGSGKT). The Beta-hairpin motif lies at 90 to 113 (YYDYYQPEAYLPSSDTYIEKDLAI). The 163-residue stretch at 429-591 (QIDDLMEEIQ…ITPQQIKKAR (163 aa)) folds into the Helicase C-terminal domain. Positions 635 to 670 (EKSMERTRKLMQEAAKKLEFIEAAQYRDELLKMEDL) constitute a UVR domain.

Belongs to the UvrB family. As to quaternary structure, forms a heterotetramer with UvrA during the search for lesions. Interacts with UvrC in an incision complex.

The protein localises to the cytoplasm. Functionally, the UvrABC repair system catalyzes the recognition and processing of DNA lesions. A damage recognition complex composed of 2 UvrA and 2 UvrB subunits scans DNA for abnormalities. Upon binding of the UvrA(2)B(2) complex to a putative damaged site, the DNA wraps around one UvrB monomer. DNA wrap is dependent on ATP binding by UvrB and probably causes local melting of the DNA helix, facilitating insertion of UvrB beta-hairpin between the DNA strands. Then UvrB probes one DNA strand for the presence of a lesion. If a lesion is found the UvrA subunits dissociate and the UvrB-DNA preincision complex is formed. This complex is subsequently bound by UvrC and the second UvrB is released. If no lesion is found, the DNA wraps around the other UvrB subunit that will check the other stand for damage. The sequence is that of UvrABC system protein B from Bacteroides fragilis (strain ATCC 25285 / DSM 2151 / CCUG 4856 / JCM 11019 / LMG 10263 / NCTC 9343 / Onslow / VPI 2553 / EN-2).